The primary structure comprises 308 residues: Cytochrome c biogenesis protein CcsA (308 aa).

7 helical membrane-spanning segments follow: residues 17 to 37, 43 to 63, 70 to 90, 142 to 162, 213 to 233, 246 to 260, and 274 to 294; these read IISI…VGLC, GMIT…IYSG, LYES…VPYF, MLLS…LLVI, VIGL…VWAN, ETWA…AIYL, and AIVA…VNLL.

This sequence belongs to the CcmF/CycK/Ccl1/NrfE/CcsA family. In terms of assembly, may interact with Ccs1.

The protein resides in the plastid. It is found in the chloroplast thylakoid membrane. In terms of biological role, required during biogenesis of c-type cytochromes (cytochrome c6 and cytochrome f) at the step of heme attachment. The protein is Cytochrome c biogenesis protein CcsA of Nymphaea alba (White water-lily).